Consider the following 464-residue polypeptide: tRNA-2-methylthio-N(6)-dimethylallyladenosine synthase (464 aa).

The MTTase N-terminal domain maps to 4 to 119; that stretch reads RTFHIMTFGC…APQAIERLVQ (116 aa). Residues cysteine 13, cysteine 48, cysteine 82, cysteine 158, cysteine 162, and cysteine 165 each contribute to the [4Fe-4S] cluster site. The Radical SAM core domain occupies 144-375; the sequence is GEVPVSAYVN…QEVQNEYSEA (232 aa). The TRAM domain occupies 378-461; it reads QAMVGKTVMV…KHSLTGEPAG (84 aa). The segment at 393 to 420 is disordered; that stretch reads SPKSAAGSGTDAQNAAEESGRTASSWQG.

Belongs to the methylthiotransferase family. MiaB subfamily. In terms of assembly, monomer. It depends on [4Fe-4S] cluster as a cofactor.

It localises to the cytoplasm. It catalyses the reaction N(6)-dimethylallyladenosine(37) in tRNA + (sulfur carrier)-SH + AH2 + 2 S-adenosyl-L-methionine = 2-methylsulfanyl-N(6)-dimethylallyladenosine(37) in tRNA + (sulfur carrier)-H + 5'-deoxyadenosine + L-methionine + A + S-adenosyl-L-homocysteine + 2 H(+). Functionally, catalyzes the methylthiolation of N6-(dimethylallyl)adenosine (i(6)A), leading to the formation of 2-methylthio-N6-(dimethylallyl)adenosine (ms(2)i(6)A) at position 37 in tRNAs that read codons beginning with uridine. In Oleidesulfovibrio alaskensis (strain ATCC BAA-1058 / DSM 17464 / G20) (Desulfovibrio alaskensis), this protein is tRNA-2-methylthio-N(6)-dimethylallyladenosine synthase.